The primary structure comprises 364 residues: Chorismate synthase (364 aa).

NADP(+) is bound by residues R48 and R54. Residues 125 to 127 (RSS), 238 to 239 (NA), G278, 293 to 297 (KPTSS), and R319 contribute to the FMN site.

The protein belongs to the chorismate synthase family. Homotetramer. FMNH2 serves as cofactor.

It carries out the reaction 5-O-(1-carboxyvinyl)-3-phosphoshikimate = chorismate + phosphate. It functions in the pathway metabolic intermediate biosynthesis; chorismate biosynthesis; chorismate from D-erythrose 4-phosphate and phosphoenolpyruvate: step 7/7. In terms of biological role, catalyzes the anti-1,4-elimination of the C-3 phosphate and the C-6 proR hydrogen from 5-enolpyruvylshikimate-3-phosphate (EPSP) to yield chorismate, which is the branch point compound that serves as the starting substrate for the three terminal pathways of aromatic amino acid biosynthesis. This reaction introduces a second double bond into the aromatic ring system. The chain is Chorismate synthase from Marinobacter nauticus (strain ATCC 700491 / DSM 11845 / VT8) (Marinobacter aquaeolei).